Reading from the N-terminus, the 880-residue chain is DNA-directed RNA polymerase subunit beta C-terminal section (880 aa).

Belongs to the RNA polymerase beta chain family. In terms of assembly, in plastids the minimal PEP RNA polymerase catalytic core is composed of four subunits: alpha, beta, beta', and beta''. When a (nuclear-encoded) sigma factor is associated with the core the holoenzyme is formed, which can initiate transcription.

Its subcellular location is the plastid. The protein localises to the chloroplast. The enzyme catalyses RNA(n) + a ribonucleoside 5'-triphosphate = RNA(n+1) + diphosphate. In terms of biological role, DNA-dependent RNA polymerase catalyzes the transcription of DNA into RNA using the four ribonucleoside triphosphates as substrates. This Pleurastrum terricola (Filamentous green alga) protein is DNA-directed RNA polymerase subunit beta C-terminal section (rpoB2).